The following is a 725-amino-acid chain: Mitochondrial 15S rRNA processing factor CCM1 (725 aa).

The N-terminal 21 residues, 1–21 (MRLSRIGTPKVSVTRVIPVRN), are a transit peptide targeting the mitochondrion. PPR repeat units lie at residues 189-223 (SAVDVTRLIQNIPKEEKYQHMSLIHEMMFNSGISP), 224-259 (DRYLTDLMMTAFSERSYYEPLVEALFQDYDINGWAP), 260-290 (TDYTFGALIKVYSKGKKLDKINNLLNQMKLK), 296-330 (NKKIYTMVLQTCMKIDDYKKTSEVFDAMKFNSVAT), 333-363 (DTTAYGSMILMHVLNDNVEAALDLYDNLETE), 401-435 (NEKLMTVMMYLTSRDGDLSLTRAIYNTIHESRFKM), and 601-635 (NHDIYHIALQACINNKDIELGQRIWQERGRFRKTP).

Belongs to the CCM1 family. In terms of assembly, binds to mitochondrial small subunit 15S rRNA.

The protein localises to the mitochondrion. Its function is as follows. Regulates mitochondrial small subunit maturation by controlling 15S rRNA 5'-end processing. Localizes to the 5' precursor of the 15S rRNA in a position that is subsequently occupied by mS47 in the mature yeast mtSSU. Uses structure and sequence-specific RNA recognition, binding to a single-stranded region of the precursor and specifically recognizing bases -6 to -1. The exchange of Ccm1 for mS47 is coupled to the irreversible removal of precursor rRNA that is accompanied by conformational changes of the mitoribosomal proteins uS5m and mS26. These conformational changes signal completion of 5'-end rRNA processing through protection of the mature 5'-end of the 15S rRNA and stabilization of mS47. The removal of the 5' precursor together with the dissociation of Ccm1 may be catalyzed by the 5'-3' exoribonuclease Pet127. Involved in the specific removal of group I introns in mitochondrial encoded transcripts. The chain is Mitochondrial 15S rRNA processing factor CCM1 (CCM1) from Komagataella phaffii (strain GS115 / ATCC 20864) (Yeast).